Consider the following 103-residue polypeptide: Large ribosomal subunit protein uL24 (103 aa).

The protein belongs to the universal ribosomal protein uL24 family. As to quaternary structure, part of the 50S ribosomal subunit.

In terms of biological role, one of two assembly initiator proteins, it binds directly to the 5'-end of the 23S rRNA, where it nucleates assembly of the 50S subunit. One of the proteins that surrounds the polypeptide exit tunnel on the outside of the subunit. This chain is Large ribosomal subunit protein uL24, found in Synechococcus sp. (strain CC9311).